Here is a 111-residue protein sequence, read N- to C-terminus: Toxin 3FTx-Tri3 (111 aa).

The signal sequence occupies residues 1 to 19 (MKTLLLALVVVAFMCLGSA). Residues 20 to 34 (DEVGLGNEQIDRGRR) constitute a propeptide that is removed on maturation. Gln-35 is subject to Pyrrolidone carboxylic acid. 4 disulfides stabilise this stretch: Cys-44-Cys-68, Cys-47-Cys-87, Cys-91-Cys-102, and Cys-103-Cys-108.

This sequence belongs to the three-finger toxin family. Ancestral subfamily. Boigatoxin sub-subfamily. As to expression, expressed by the venom gland.

The protein resides in the secreted. Functionally, potent postsynaptic neurotoxin. Displays readily reversible competitive antagonism at the nicotinic acetylcholine receptor (nAChR). The sequence is that of Toxin 3FTx-Tri3 from Trimorphodon biscutatus (Western lyre snake).